The following is a 40-amino-acid chain: MKGTKKKTPCNKKLGGYLKEQKGRLYIIRRCVVMLICWHD.

Residues 9-40 (PCNKKLGGYLKEQKGRLYIIRRCVVMLICWHD) form a required for DVL/RTFL small polypeptide activity region. Residues 12 to 28 (KKLGGYLKEQKGRLYII) traverse the membrane as a helical segment.

The protein belongs to the DVL/RTFL small polypeptides family. Mostly expressed in flowers and stems, and, to a lower extent, in roots and leaves.

It is found in the cell membrane. Its function is as follows. Small polypeptide acting as a regulatory molecule which coordinates cellular responses required for differentiation, growth and development, including leaves shape, pedicule elongation, inflorescence organization and fruit maturation, probably by restricting polar cell proliferation in lateral organs and coordinating socket cell recruitment and differentiation at trichome sites. This Arabidopsis thaliana (Mouse-ear cress) protein is Small polypeptide DEVIL 3.